We begin with the raw amino-acid sequence, 428 residues long: Histidine--tRNA ligase (428 aa).

It belongs to the class-II aminoacyl-tRNA synthetase family. Homodimer.

The protein resides in the cytoplasm. The catalysed reaction is tRNA(His) + L-histidine + ATP = L-histidyl-tRNA(His) + AMP + diphosphate + H(+). This is Histidine--tRNA ligase from Lactobacillus helveticus (strain DPC 4571).